Reading from the N-terminus, the 108-residue chain is UPF0060 membrane protein amb3269 (108 aa).

A run of 4 helical transmembrane segments spans residues 4 to 24 (IPTY…FWAW), 31 to 51 (PLWL…LTRI), 59 to 79 (AYAA…WAVE), and 85 to 105 (RWDT…IFGP).

It belongs to the UPF0060 family.

The protein resides in the cell inner membrane. This is UPF0060 membrane protein amb3269 from Paramagnetospirillum magneticum (strain ATCC 700264 / AMB-1) (Magnetospirillum magneticum).